The following is a 253-amino-acid chain: 5-oxoprolinase subunit A (253 aa).

The protein belongs to the LamB/PxpA family. In terms of assembly, forms a complex composed of PxpA, PxpB and PxpC.

It carries out the reaction 5-oxo-L-proline + ATP + 2 H2O = L-glutamate + ADP + phosphate + H(+). In terms of biological role, catalyzes the cleavage of 5-oxoproline to form L-glutamate coupled to the hydrolysis of ATP to ADP and inorganic phosphate. The sequence is that of 5-oxoprolinase subunit A from Shouchella clausii (strain KSM-K16) (Alkalihalobacillus clausii).